Reading from the N-terminus, the 419-residue chain is G-protein coupled receptor 151 (419 aa).

The Extracellular portion of the chain corresponds to 1–41; that stretch reads MLAAAFADSNSSSMNVSFAHLHFAGGYLPSDSQDWRTIIPA. N-linked (GlcNAc...) asparagine glycosylation is found at Asn10 and Asn15. A helical membrane pass occupies residues 42–62; it reads LLVAVCLVGFVGNLCVIGILL. The Cytoplasmic portion of the chain corresponds to 63-71; that stretch reads HNAWKGKPS. The chain crosses the membrane as a helical span at residues 72-92; sequence MIHSLILNLSLADLSLLLFSA. Residues 93–116 lie on the Extracellular side of the membrane; sequence PIRATAYSKSVWDLGWFVCKSSDW. Cys111 and Cys187 are oxidised to a cystine. Residues 117–137 form a helical membrane-spanning segment; it reads FIHTCMAAKSLTIVVVAKVCF. Over 138-153 the chain is Cytoplasmic; it reads MYASDPAKQVSIHNYT. A helical transmembrane segment spans residues 154-174; it reads IWSVLVAIWTVASLLPLPEWF. Residues 175 to 201 lie on the Extracellular side of the membrane; the sequence is FSTIRHHEGVEMCLVDVPAVAEEFMSM. Residues 202–222 traverse the membrane as a helical segment; sequence FGKLYPLLAFGLPLFFASFYF. Residues 223-252 lie on the Cytoplasmic side of the membrane; it reads WRAYDQCKKRGTKTQNLRNQIRSKQVTVML. Residues 253 to 273 traverse the membrane as a helical segment; that stretch reads LSIAIISALLWLPEWVAWLWV. Residues 274 to 286 are Extracellular-facing; the sequence is WHLKAAGPAPPQG. The chain crosses the membrane as a helical span at residues 287-307; it reads FIALSQVLMFSISSANPLIFL. Residues 308–419 lie on the Cytoplasmic side of the membrane; that stretch reads VMSEEFREGL…EDQETGEGVK (112 aa). Residues 330–419 are disordered; sequence PTVSESQETP…EDQETGEGVK (90 aa). Residues 332–341 show a composition bias toward polar residues; sequence VSESQETPAG. The segment covering 410-419 has biased composition (acidic residues); that stretch reads EDQETGEGVK.

The protein belongs to the G-protein coupled receptor 1 family. High expression in the spinal cord.

Its subcellular location is the cell membrane. In terms of biological role, proton-sensing G-protein coupled receptor. This is G-protein coupled receptor 151 (GPR151) from Homo sapiens (Human).